The sequence spans 215 residues: LexA repressor (215 aa).

Positions 28-48 form a DNA-binding region, H-T-H motif; it reads RAEIAAELGFSSPNAAEEHLR. Residues Ser133 and Lys170 each act as for autocatalytic cleavage activity in the active site.

This sequence belongs to the peptidase S24 family. Homodimer.

The catalysed reaction is Hydrolysis of Ala-|-Gly bond in repressor LexA.. Its function is as follows. Represses a number of genes involved in the response to DNA damage (SOS response), including recA and lexA. In the presence of single-stranded DNA, RecA interacts with LexA causing an autocatalytic cleavage which disrupts the DNA-binding part of LexA, leading to derepression of the SOS regulon and eventually DNA repair. This Burkholderia cenocepacia (strain HI2424) protein is LexA repressor.